We begin with the raw amino-acid sequence, 93 residues long: Large ribosomal subunit protein uL23 (93 aa).

It belongs to the universal ribosomal protein uL23 family. Part of the 50S ribosomal subunit. Contacts protein L29, and trigger factor when it is bound to the ribosome.

Functionally, one of the early assembly proteins it binds 23S rRNA. One of the proteins that surrounds the polypeptide exit tunnel on the outside of the ribosome. Forms the main docking site for trigger factor binding to the ribosome. The polypeptide is Large ribosomal subunit protein uL23 (Campylobacter jejuni subsp. doylei (strain ATCC BAA-1458 / RM4099 / 269.97)).